Here is a 376-residue protein sequence, read N- to C-terminus: Queuine tRNA-ribosyltransferase (376 aa).

Asp89 (proton acceptor) is an active-site residue. Substrate-binding positions include 89 to 93 (DSGGF), Asp143, Gln187, and Gly214. The interval 245 to 251 (GVGKPQD) is RNA binding. Catalysis depends on Asp264, which acts as the Nucleophile. The RNA binding; important for wobble base 34 recognition stretch occupies residues 269–273 (TRNAR). Zn(2+)-binding residues include Cys302, Cys304, Cys307, and His333.

This sequence belongs to the queuine tRNA-ribosyltransferase family. In terms of assembly, homodimer. Within each dimer, one monomer is responsible for RNA recognition and catalysis, while the other monomer binds to the replacement base PreQ1. The cofactor is Zn(2+).

It catalyses the reaction 7-aminomethyl-7-carbaguanine + guanosine(34) in tRNA = 7-aminomethyl-7-carbaguanosine(34) in tRNA + guanine. It participates in tRNA modification; tRNA-queuosine biosynthesis. Its function is as follows. Catalyzes the base-exchange of a guanine (G) residue with the queuine precursor 7-aminomethyl-7-deazaguanine (PreQ1) at position 34 (anticodon wobble position) in tRNAs with GU(N) anticodons (tRNA-Asp, -Asn, -His and -Tyr). Catalysis occurs through a double-displacement mechanism. The nucleophile active site attacks the C1' of nucleotide 34 to detach the guanine base from the RNA, forming a covalent enzyme-RNA intermediate. The proton acceptor active site deprotonates the incoming PreQ1, allowing a nucleophilic attack on the C1' of the ribose to form the product. After dissociation, two additional enzymatic reactions on the tRNA convert PreQ1 to queuine (Q), resulting in the hypermodified nucleoside queuosine (7-(((4,5-cis-dihydroxy-2-cyclopenten-1-yl)amino)methyl)-7-deazaguanosine). The protein is Queuine tRNA-ribosyltransferase of Erwinia tasmaniensis (strain DSM 17950 / CFBP 7177 / CIP 109463 / NCPPB 4357 / Et1/99).